The following is a 167-amino-acid chain: MIRKSLLFLLLGLTLTAGLDQAVKYWVMQNMPLGTEIPLIPFLSLYHVRNSGIAFSFFSSFSHWGIIAITIIVIIFLLWLWKNTEDNKFLMRFGLVLIIGGAIGNLIDRIRFHHVTDYILFYIDDIFYFAIFNLADSFITLGVIVILIEELRTWMKAKRDSNHTSSH.

The next 3 helical transmembrane spans lie at 7–27, 61–81, and 87–107; these read LFLL…KYWV, FSHW…LWLW, and NKFL…GNLI. Catalysis depends on residues D117 and D136. The chain crosses the membrane as a helical span at residues 126 to 146; that stretch reads IFYFAIFNLADSFITLGVIVI.

Belongs to the peptidase A8 family.

The protein resides in the cell inner membrane. It catalyses the reaction Release of signal peptides from bacterial membrane prolipoproteins. Hydrolyzes -Xaa-Yaa-Zaa-|-(S,diacylglyceryl)Cys-, in which Xaa is hydrophobic (preferably Leu), and Yaa (Ala or Ser) and Zaa (Gly or Ala) have small, neutral side chains.. It functions in the pathway protein modification; lipoprotein biosynthesis (signal peptide cleavage). Functionally, this protein specifically catalyzes the removal of signal peptides from prolipoproteins. The protein is Lipoprotein signal peptidase of Bartonella tribocorum (strain CIP 105476 / IBS 506).